A 155-amino-acid chain; its full sequence is Ribosome maturation factor RimP (155 aa).

It belongs to the RimP family.

The protein localises to the cytoplasm. Functionally, required for maturation of 30S ribosomal subunits. The protein is Ribosome maturation factor RimP of Listeria monocytogenes serotype 4a (strain HCC23).